Reading from the N-terminus, the 422-residue chain is Histidine--tRNA ligase (422 aa).

Belongs to the class-II aminoacyl-tRNA synthetase family. In terms of assembly, homodimer.

The protein resides in the cytoplasm. It catalyses the reaction tRNA(His) + L-histidine + ATP = L-histidyl-tRNA(His) + AMP + diphosphate + H(+). This chain is Histidine--tRNA ligase, found in Vesicomyosocius okutanii subsp. Calyptogena okutanii (strain HA).